A 186-amino-acid chain; its full sequence is ATP synthase subunit delta (186 aa).

This sequence belongs to the ATPase delta chain family. In terms of assembly, F-type ATPases have 2 components, F(1) - the catalytic core - and F(0) - the membrane proton channel. F(1) has five subunits: alpha(3), beta(3), gamma(1), delta(1), epsilon(1). CF(0) has four main subunits: a(1), b(1), b'(1) and c(10-14). The alpha and beta chains form an alternating ring which encloses part of the gamma chain. F(1) is attached to F(0) by a central stalk formed by the gamma and epsilon chains, while a peripheral stalk is formed by the delta, b and b' chains.

The protein resides in the cell inner membrane. Its function is as follows. F(1)F(0) ATP synthase produces ATP from ADP in the presence of a proton or sodium gradient. F-type ATPases consist of two structural domains, F(1) containing the extramembraneous catalytic core and F(0) containing the membrane proton channel, linked together by a central stalk and a peripheral stalk. During catalysis, ATP synthesis in the catalytic domain of F(1) is coupled via a rotary mechanism of the central stalk subunits to proton translocation. In terms of biological role, this protein is part of the stalk that links CF(0) to CF(1). It either transmits conformational changes from CF(0) to CF(1) or is implicated in proton conduction. The chain is ATP synthase subunit delta from Rhodopseudomonas palustris (strain BisB5).